Consider the following 139-residue polypeptide: Small ribosomal subunit protein uS19 (139 aa).

Belongs to the universal ribosomal protein uS19 family.

Protein S19 forms a complex with S13 that binds strongly to the 16S ribosomal RNA. The protein is Small ribosomal subunit protein uS19 of Ignicoccus hospitalis (strain KIN4/I / DSM 18386 / JCM 14125).